The following is a 20-amino-acid chain: Venom peptide Ocy8 (20 aa).

In terms of tissue distribution, expressed by the venom gland.

It is found in the secreted. In Opisthacanthus cayaporum (South American scorpion), this protein is Venom peptide Ocy8.